Consider the following 295-residue polypeptide: Small ribosomal subunit biogenesis GTPase RsgA (295 aa).

Positions K68–L228 constitute a CP-type G domain. Residues N117–D120 and G170–S178 contribute to the GTP site. C250, C255, H257, and C263 together coordinate Zn(2+).

This sequence belongs to the TRAFAC class YlqF/YawG GTPase family. RsgA subfamily. Monomer. Associates with 30S ribosomal subunit, binds 16S rRNA. The cofactor is Zn(2+).

It is found in the cytoplasm. Its function is as follows. One of several proteins that assist in the late maturation steps of the functional core of the 30S ribosomal subunit. Helps release RbfA from mature subunits. May play a role in the assembly of ribosomal proteins into the subunit. Circularly permuted GTPase that catalyzes slow GTP hydrolysis, GTPase activity is stimulated by the 30S ribosomal subunit. This chain is Small ribosomal subunit biogenesis GTPase RsgA, found in Thermotoga petrophila (strain ATCC BAA-488 / DSM 13995 / JCM 10881 / RKU-1).